Consider the following 338-residue polypeptide: Lipoyl synthase (338 aa).

A disordered region spans residues 1–24; that stretch reads MTTVQEAVPNLIPTQDATPRPAPK. Cys84, Cys89, Cys95, Cys110, Cys114, Cys117, and Ser324 together coordinate [4Fe-4S] cluster. Residues 96–313 enclose the Radical SAM core domain; the sequence is FSGGTATFMI…AEEGYKMGFK (218 aa).

This sequence belongs to the radical SAM superfamily. Lipoyl synthase family. The cofactor is [4Fe-4S] cluster.

It localises to the cytoplasm. The enzyme catalyses [[Fe-S] cluster scaffold protein carrying a second [4Fe-4S](2+) cluster] + N(6)-octanoyl-L-lysyl-[protein] + 2 oxidized [2Fe-2S]-[ferredoxin] + 2 S-adenosyl-L-methionine + 4 H(+) = [[Fe-S] cluster scaffold protein] + N(6)-[(R)-dihydrolipoyl]-L-lysyl-[protein] + 4 Fe(3+) + 2 hydrogen sulfide + 2 5'-deoxyadenosine + 2 L-methionine + 2 reduced [2Fe-2S]-[ferredoxin]. The protein operates within protein modification; protein lipoylation via endogenous pathway; protein N(6)-(lipoyl)lysine from octanoyl-[acyl-carrier-protein]: step 2/2. In terms of biological role, catalyzes the radical-mediated insertion of two sulfur atoms into the C-6 and C-8 positions of the octanoyl moiety bound to the lipoyl domains of lipoate-dependent enzymes, thereby converting the octanoylated domains into lipoylated derivatives. The polypeptide is Lipoyl synthase (Pseudomonas putida (strain ATCC 700007 / DSM 6899 / JCM 31910 / BCRC 17059 / LMG 24140 / F1)).